A 947-amino-acid chain; its full sequence is DNA polymerase (947 aa).

It belongs to the DNA polymerase type-B family.

The enzyme catalyses DNA(n) + a 2'-deoxyribonucleoside 5'-triphosphate = DNA(n+1) + diphosphate. The protein is DNA polymerase of Red sea bream iridovirus (RSIV).